Here is a 197-residue protein sequence, read N- to C-terminus: Outer membrane protein 26 (197 aa).

The signal sequence occupies residues 1 to 23; that stretch reads MKNIAKVTALALGIALASGYASA.

The protein belongs to the Skp family.

The protein resides in the cell outer membrane. This is Outer membrane protein 26 (omp26) from Haemophilus influenzae (strain ATCC 51907 / DSM 11121 / KW20 / Rd).